We begin with the raw amino-acid sequence, 239 residues long: Ankyrin repeat domain-containing protein 49 (239 aa).

Phosphoserine is present on S49. ANK repeat units follow at residues 73 to 103, 107 to 136, 140 to 169, and 173 to 206; these read DPSR…HVNT, DEYT…DVHA, DGWT…DINA, and GLLT…GLKN.

In terms of tissue distribution, widely expressed in fetus, at a high level in fetal liver, brain and lung.

Its subcellular location is the nucleus. Induces HBG1 expression. May have a role in spermatogenesis where it promotes autophagy in response to serum starvation, via the NF-kappaB pathway. The polypeptide is Ankyrin repeat domain-containing protein 49 (ANKRD49) (Homo sapiens (Human)).